The sequence spans 586 residues: Adenine deaminase (586 aa).

It belongs to the metallo-dependent hydrolases superfamily. Adenine deaminase family. Mn(2+) serves as cofactor.

The enzyme catalyses adenine + H2O + H(+) = hypoxanthine + NH4(+). This Bdellovibrio bacteriovorus (strain ATCC 15356 / DSM 50701 / NCIMB 9529 / HD100) protein is Adenine deaminase.